A 188-amino-acid polypeptide reads, in one-letter code: Probable RNA 2'-phosphotransferase (188 aa).

Belongs to the KptA/TPT1 family.

Functionally, removes the 2'-phosphate from RNA via an intermediate in which the phosphate is ADP-ribosylated by NAD followed by a presumed transesterification to release the RNA and generate ADP-ribose 1''-2''-cyclic phosphate (APPR&gt;P). May function as an ADP-ribosylase. The chain is Probable RNA 2'-phosphotransferase from Pseudomonas savastanoi pv. phaseolicola (strain 1448A / Race 6) (Pseudomonas syringae pv. phaseolicola (strain 1448A / Race 6)).